A 244-amino-acid chain; its full sequence is UPF0280 protein Mhun_0136 (244 aa).

The protein belongs to the UPF0280 family.

This Methanospirillum hungatei JF-1 (strain ATCC 27890 / DSM 864 / NBRC 100397 / JF-1) protein is UPF0280 protein Mhun_0136.